The primary structure comprises 323 residues: MTSYALVGDVGGTNARLALCAVATGEISQAKTYSGLDYDSLEAVIKQYLSEHKVTVEHACIAIACPITGDWVAMTNHTWAFSIAAMQQNLGLKHLEIINDFTAVSMAIPMLSEQDVLQFGGTSPQPGKPVAVYGAGTGLGVAHLVNVDSRWISLPGEGGHVDFAPNSEEEDRILAVLRQELGHVSAERVLSGPGLVNLYRAIVISDGRLPENLAPKDVTERALADSCTDCRRALSLFCVIMGRFGGNLALNLSTFGGVYIAGGIVPRFMEFFKASGFRGAFEDKGRFKDFLQDIPVYMITHQQPGLLGAGAYLRQKLGYTLHP.

8 to 13 (GDVGGT) contributes to the ATP binding site.

Belongs to the bacterial glucokinase family.

Its subcellular location is the cytoplasm. It catalyses the reaction D-glucose + ATP = D-glucose 6-phosphate + ADP + H(+). The protein is Glucokinase of Yersinia enterocolitica serotype O:8 / biotype 1B (strain NCTC 13174 / 8081).